A 304-amino-acid chain; its full sequence is Probable phytol kinase 2, chloroplastic (304 aa).

A chloroplast-targeting transit peptide spans 1-59; it reads MVSLISAHLLSLPSSAPRSRPQSRPPLSPPAAAAAASCSFDLPRPRRLVADGSRRKGTM. A run of 7 helical transmembrane segments spans residues 68–88, 113–133, 134–154, 170–190, 194–214, 231–251, and 256–276; these read SGLA…LALL, IGMV…APFL, AAVA…GVMK, ELLK…SIFW, PIAI…DIVG, AGSI…MHYF, and FIEE…TAAL.

This sequence belongs to the polyprenol kinase family.

The protein resides in the plastid. It is found in the chloroplast membrane. It carries out the reaction phytol + CTP = phytyl phosphate + CDP + H(+). It participates in cofactor biosynthesis; tocopherol biosynthesis. In terms of biological role, involved in the activation and reutilization of phytol from chlorophyll degradation in plant metabolism, including tocopherol biosynthesis. Catalyzes the conversion of phytol to phytol monophosphate (PMP). In Oryza sativa subsp. japonica (Rice), this protein is Probable phytol kinase 2, chloroplastic.